Reading from the N-terminus, the 105-residue chain is Thioredoxin (105 aa).

Positions 2–103 (VKQIESKSAF…KEKLEATIKG (102 aa)) constitute a Thioredoxin domain. K3 carries the N6-acetyllysine modification. K8 bears the N6-succinyllysine mark. Active-site nucleophile residues include C32 and C35. A disulfide bridge connects residues C32 and C35. Residue K39 is modified to N6-acetyllysine. 2 positions are modified to S-nitrosocysteine: C62 and C69. C73 carries the S-nitrosocysteine; alternate modification. The residue at position 94 (K94) is an N6-acetyllysine; alternate. K94 carries the post-translational modification N6-succinyllysine; alternate.

It belongs to the thioredoxin family. Homodimer; disulfide-linked. Interacts with TXNIP through the redox-active site. Interacts with MAP3K5 and CASP3. Interacts with APEX1; the interaction stimulates the FOS/JUN AP-1 DNA-binding activity in a redox-dependent manner. In the fully reduced protein, both Cys-69 and Cys-73 are nitrosylated in response to nitric oxide (NO). When two disulfide bonds are present in the protein, only Cys-73 is nitrosylated. Cys-73 can serve as donor for nitrosylation of target proteins.

The protein resides in the nucleus. Its subcellular location is the cytoplasm. The protein localises to the secreted. Participates in various redox reactions through the reversible oxidation of its active center dithiol to a disulfide and catalyzes dithiol-disulfide exchange reactions. Plays a role in the reversible S-nitrosylation of cysteine residues in target proteins, and thereby contributes to the response to intracellular nitric oxide. Nitrosylates the active site Cys of CASP3 in response to nitric oxide (NO), and thereby inhibits caspase-3 activity. Induces the FOS/JUN AP-1 DNA binding activity in ionizing radiation (IR) cells through its oxidation/reduction status and stimulates AP-1 transcriptional activity. This Equus caballus (Horse) protein is Thioredoxin (TXN).